The sequence spans 91 residues: MAHKKAGGSTRNGRDSEAKRLGVKMYGGQAIIPGNIIVRQRGTQFHAGYGVGMGKDHTLFAKVEGVIKFQVKGAFGRRYVSIVPKTEVSAA.

This sequence belongs to the bacterial ribosomal protein bL27 family.

The chain is Large ribosomal subunit protein bL27 from Pseudomonas savastanoi pv. phaseolicola (strain 1448A / Race 6) (Pseudomonas syringae pv. phaseolicola (strain 1448A / Race 6)).